A 130-amino-acid chain; its full sequence is Cytochrome c-type biogenesis protein CcmE (130 aa).

Over 1 to 7 (MKKKHKR) the chain is Cytoplasmic. Residues 8–28 (LLITSGIFCFLSCAVFFILTT) form a helical; Signal-anchor for type II membrane protein membrane-spanning segment. The Extracellular segment spans residues 29-130 (LKENISFFYT…DENYKPKVLK (102 aa)). The heme site is built by His120 and Tyr124.

The protein belongs to the CcmE/CycJ family.

The protein localises to the cell membrane. Its function is as follows. Heme chaperone required for the biogenesis of c-type cytochromes. Transiently binds heme delivered by CcmC and transfers the heme to apo-cytochromes in a process facilitated by CcmF and CcmH. The sequence is that of Cytochrome c-type biogenesis protein CcmE from Wolbachia pipientis subsp. Culex pipiens (strain wPip).